The sequence spans 567 residues: MSDLEAPLRPKRKKIWVDYFVKFRWILVIFVVLPISFTLYFLTYLGDVRSEWKSFKTRQKEHDENVQKVVNRLKKRNPSKDGLVCTARKPWVAVGMRNVDYKRARHFEVDLSPFRNILDIDKERMIARVEPLVNMGQITRVTVPMNLALAVVAELDDLTVGGLINGYGIEGSSHKYGLFSDTVVAFEIILADGSLVKATKDNEYSDLFYAIPWSQGTLGLLVAAEVKLIPIKEYMKLTYKPVVGNLKDIAQAYSDSFAPRDGDQDNDEKVPDFVETMIYSPTRAVCMTGRYASKEEAKKKGNKINNVGWWYKTWFYQHAETALKKGLFVEYIPTREYYHRHTRCLYWEGKLILPFGDQFSFRFLFGWLMPPKVSLLKATQGEAIRNYYHEMHVIQDMLVPLYKVGDALEWSDREMEIYPIWLCPHKLFKLPIKTMIYPEAGFELQRRQGDTQNAQMFTDVGVYYAPGPVLRGEVFDGAEAVRKMESWMIENHCFQPQYAVSELNEKNFWRMFDAGLYEHCRRKYGAVGTFMSVYYKCKKGRKTEKEVREAEQAHLDTAYPEVDQPPD.

Over 1–24 (MSDLEAPLRPKRKKIWVDYFVKFR) the chain is Lumenal. The helical; Signal-anchor transmembrane segment at 25 to 45 (WILVIFVVLPISFTLYFLTYL) threads the bilayer. In terms of domain architecture, FAD-binding PCMH-type spans 45 to 231 (LGDVRSEWKS…VAAEVKLIPI (187 aa)). The Cytoplasmic portion of the chain corresponds to 46–567 (GDVRSEWKSF…AYPEVDQPPD (522 aa)). Residues 520–541 (CRRKYGAVGTFMSVYYKCKKGR) form an interaction with calmodulin region. A disordered region spans residues 548-567 (REAEQAHLDTAYPEVDQPPD).

This sequence belongs to the DIMINUTO family. As to expression, highly expressed in the apical region and root tips and lower levels in immature and mature internodes and leaves.

The protein localises to the membrane. The enzyme catalyses lathosterol + NADP(+) = 5alpha-cholesta-7,24-dien-3beta-ol + NADPH + H(+). In terms of biological role, plays a critical role in the general process of plant cell elongation. This chain is Delta(24)-sterol reductase (DIM), found in Pisum sativum (Garden pea).